The primary structure comprises 632 residues: CREB-regulated transcription coactivator 3 (632 aa).

Serine 66 carries the post-translational modification Phosphoserine. Over residues 105–115 the composition is skewed to basic residues; the sequence is NRLHSSHHRPV. The segment at 105-156 is disordered; sequence NRLHSSHHRPVEKHGRQCDSSPYGSVYLSPPPDNNWRRTNSDSALHTSASSS. Serine 133 is subject to Phosphoserine. Serine 145 bears the Phosphoserine; by SIK2 mark. The span at 145 to 156 shows a compositional bias: low complexity; it reads SDSALHTSASSS. At threonine 151 the chain carries Phosphothreonine. Serine 293 carries the post-translational modification Phosphoserine. Residues 310–338 show a composition bias toward polar residues; sequence GIQNTCSNPSIQATMNNNVNNHTPPGRNN. The tract at residues 310–455 is disordered; that stretch reads GIQNTCSNPS…ESQNFQPPSP (146 aa). Positions 339–360 are enriched in low complexity; it reads PTLHPSLRLSSLSNPSLPTSAL. 2 positions are modified to phosphoserine: serine 372 and serine 391. A compositionally biased stretch (polar residues) spans 372–405; that stretch reads SPLTLTPGSESNRSISNQFSPTSPMDMLPNSQGV. Positions 413–424 are enriched in pro residues; it reads SLPPLEPPPPYP. Residues 425 to 440 show a composition bias toward low complexity; the sequence is LYTDQPQPQLHHTQQQ. Serine 556 is modified (phosphoserine).

It belongs to the TORC family. As to quaternary structure, binding, as a tetramer, through its N-terminal region, with the bZIP domain of creb1 enhances recruitment of taf4 to the promoter. 'Arg-300' in the bZIP domain of creb1 is essential for this interaction.

It localises to the nucleus. The protein localises to the cytoplasm. Transcriptional coactivator for creb1 which activates transcription through both consensus and variant cAMP response element (CRE) sites. Acts as a coactivator, in the SIK/TORC signaling pathway, being active when dephosphorylated and acts independently of creb1 'Ser-119' phosphorylation. Enhances the interaction of creb1 with taf4. Regulates the expression of specific CREB-activated genes such as the steroidogenic gene, StAR. Potent coactivator of ppargc1a and inducer of mitochondrial biogenesis in muscle cells. The chain is CREB-regulated transcription coactivator 3 (crtc3) from Xenopus laevis (African clawed frog).